The sequence spans 856 residues: Leucine--tRNA ligase (856 aa).

The 'HIGH' region signature appears at 42–52 (PYPSGNLHMGH). The 'KMSKS' region signature appears at 617–621 (KMSKS). Lys620 provides a ligand contact to ATP.

Belongs to the class-I aminoacyl-tRNA synthetase family.

It localises to the cytoplasm. The enzyme catalyses tRNA(Leu) + L-leucine + ATP = L-leucyl-tRNA(Leu) + AMP + diphosphate. The sequence is that of Leucine--tRNA ligase from Rippkaea orientalis (strain PCC 8801 / RF-1) (Cyanothece sp. (strain PCC 8801)).